Reading from the N-terminus, the 662-residue chain is Primary amine oxidase 2 (662 aa).

The signal sequence occupies residues M1–S22. N-linked (GlcNAc...) asparagine glycosylation occurs at N154. F321–Y332 contacts substrate. The active-site Proton acceptor is D323. A disulfide bridge connects residues C342 and C368. V405–Y410 contacts substrate. Y408 (schiff-base intermediate with substrate; via topaquinone) is an active-site residue. Y408 carries the post-translational modification 2',4',5'-topaquinone. H464 and H466 together coordinate Cu cation. Positions 473 and 475 each coordinate Mn(2+). An N-linked (GlcNAc...) asparagine glycan is attached at N568. Positions 602 and 603 each coordinate Mn(2+). Residue H613 coordinates Cu cation.

The protein belongs to the copper/topaquinone oxidase family. Homodimer. Cu cation serves as cofactor. Mn(2+) is required as a cofactor. It depends on L-topaquinone as a cofactor. Topaquinone (TPQ) is generated by copper-dependent autoxidation of a specific tyrosyl residue.

It catalyses the reaction a primary methyl amine + O2 + H2O = an aldehyde + H2O2 + NH4(+). The chain is Primary amine oxidase 2 from Arabidopsis thaliana (Mouse-ear cress).